Here is a 213-residue protein sequence, read N- to C-terminus: MGKYQPSFQTKKGWTEVICGPMFSGKTEKLLHKIKRWKIAKISVVIFKPIIDTRQTNIVKSRNGEYDQAITINSPFEIYDHLVDKNYQIVAIDEAQFFSNEIIEVVTTLNEIGTNVIISGLDTDFRAEPFGCIPQLLAIADVVNKLDAICNVCGSLAQRTQRLVNKNTNDNLVLIGDAEAYEARCKLHHSFLTKKHVTVKTKNFKEQVQGKTQ.

Residues 20-27 (GPMFSGKT) and 93-96 (DEAQ) each bind ATP. The active-site Proton acceptor is the E94. Residues C150, C153, C185, and H188 each coordinate Zn(2+).

It belongs to the thymidine kinase family. Homotetramer.

Its subcellular location is the cytoplasm. It carries out the reaction thymidine + ATP = dTMP + ADP + H(+). The chain is Thymidine kinase from Mycoplasma genitalium (strain ATCC 33530 / DSM 19775 / NCTC 10195 / G37) (Mycoplasmoides genitalium).